A 43-amino-acid polypeptide reads, in one-letter code: Protein PsbN (43 aa).

The helical transmembrane segment at 7-24 threads the bilayer; it reads VAISISRSLVSFTGYALY.

Belongs to the PsbN family.

Its subcellular location is the plastid. The protein resides in the chloroplast thylakoid membrane. May play a role in photosystem I and II biogenesis. The protein is Protein PsbN of Ginkgo biloba (Ginkgo).